The primary structure comprises 64 residues: Beta-defensin 5 (64 aa).

The N-terminal stretch at 1–23 is a signal peptide; the sequence is MKIHYLLFAFLLVLLSPLAGVFS. 3 disulfides stabilise this stretch: cysteine 32-cysteine 60, cysteine 39-cysteine 53, and cysteine 43-cysteine 61.

Belongs to the beta-defensin family.

It is found in the secreted. In terms of biological role, has antibacterial activity. The chain is Beta-defensin 5 (Defb5) from Mus musculus (Mouse).